Here is a 265-residue protein sequence, read N- to C-terminus: Cytochrome c oxidase subunit 3 (265 aa).

6 helical membrane passes run Pro-16–Leu-36, Pro-40–Trp-60, Cys-83–Phe-103, Val-159–Gln-179, Val-198–Met-218, and Ile-241–Trp-261.

It belongs to the cytochrome c oxidase subunit 3 family. In terms of assembly, component of the cytochrome c oxidase (complex IV, CIV), a multisubunit enzyme composed of a catalytic core of 3 subunits and several supernumerary subunits. The complex exists as a monomer or a dimer and forms supercomplexes (SCs) in the inner mitochondrial membrane with ubiquinol-cytochrome c oxidoreductase (cytochrome b-c1 complex, complex III, CIII).

Its subcellular location is the mitochondrion inner membrane. It carries out the reaction 4 Fe(II)-[cytochrome c] + O2 + 8 H(+)(in) = 4 Fe(III)-[cytochrome c] + 2 H2O + 4 H(+)(out). In terms of biological role, component of the cytochrome c oxidase, the last enzyme in the mitochondrial electron transport chain which drives oxidative phosphorylation. The respiratory chain contains 3 multisubunit complexes succinate dehydrogenase (complex II, CII), ubiquinol-cytochrome c oxidoreductase (cytochrome b-c1 complex, complex III, CIII) and cytochrome c oxidase (complex IV, CIV), that cooperate to transfer electrons derived from NADH and succinate to molecular oxygen, creating an electrochemical gradient over the inner membrane that drives transmembrane transport and the ATP synthase. Cytochrome c oxidase is the component of the respiratory chain that catalyzes the reduction of oxygen to water. Electrons originating from reduced cytochrome c in the intermembrane space (IMS) are transferred via the dinuclear copper A center (CU(A)) of subunit 2 and heme A of subunit 1 to the active site in subunit 1, a binuclear center (BNC) formed by heme A3 and copper B (CU(B)). The BNC reduces molecular oxygen to 2 water molecules using 4 electrons from cytochrome c in the IMS and 4 protons from the mitochondrial matrix. The protein is Cytochrome c oxidase subunit 3 (COIII) of Mytilus edulis (Blue mussel).